The chain runs to 251 residues: Phosphate import ATP-binding protein PstB 2 (251 aa).

Residues 5–246 (ISAKDVHLSY…PKKQITSDYL (242 aa)) form the ABC transporter domain. 37-44 (GPSGCGKS) is a binding site for ATP.

It belongs to the ABC transporter superfamily. Phosphate importer (TC 3.A.1.7) family. In terms of assembly, the complex is composed of two ATP-binding proteins (PstB), two transmembrane proteins (PstC and PstA) and a solute-binding protein (PstS).

It localises to the cell membrane. The enzyme catalyses phosphate(out) + ATP + H2O = ADP + 2 phosphate(in) + H(+). Functionally, part of the ABC transporter complex PstSACB involved in phosphate import. Responsible for energy coupling to the transport system. This is Phosphate import ATP-binding protein PstB 2 from Lactobacillus acidophilus (strain ATCC 700396 / NCK56 / N2 / NCFM).